A 389-amino-acid polypeptide reads, in one-letter code: Large envelope protein (389 aa).

Polar residues-rich tracts occupy residues 1–10 (MGQNLSTSNP) and 85–95 (STNRQTGRQPT). Disordered stretches follow at residues 1–54 (MGQN…AFGL) and 73–106 (ILHT…DTHP). Residue Gly-2 is the site of N-myristoyl glycine; by host attachment. A pre-S1 region spans residues 2–108 (GQNLSTSNPL…PPLRDTHPQA (107 aa)). A pre-S region spans residues 2–163 (GQNLSTSNPL…FSRIGDPVTN (162 aa)). The Virion surface; in external conformation segment spans residues 2–170 (GQNLSTSNPL…VTNMENITSG (169 aa)). Over 2–242 (GQNLSTSNPL…PGYRWMCLRG (241 aa)) the chain is Intravirion; in internal conformation. The pre-S2 stretch occupies residues 109 to 163 (VQWNSTTFHQTLQDPRVRGLYFPAGGSSSGTVNPVPTTASPLSSIFSRIGDPVTN). Residues 171-191 (FLGPLLVLQAGFFLLTRILTI) form a helical membrane-spanning segment. At 192–242 (PQSLDSWWTSLNFRGGTTVCLGQNSQSPTSNHSPTSCPPTCPGYRWMCLRG) the chain is on the intravirion; in external conformation side. Residues 243–263 (FIIFLFILLLCLIFLLVLLEY) form a helical membrane-spanning segment. Residues 264 to 337 (QGMLHVCPLI…WASVRFSWLS (74 aa)) are Virion surface-facing. The N-linked (GlcNAc...) asparagine; by host glycan is linked to Asn-309. The helical transmembrane segment at 338 to 358 (LLVPFVQWFVGLSPTVWLSAI) threads the bilayer. Residues 359–364 (WMMWYW) lie on the Intravirion side of the membrane. Residues 365-387 (GPSLYSILSPFLPLLPIFFCLWV) traverse the membrane as a helical segment. The Virion surface portion of the chain corresponds to 388 to 389 (YI).

Belongs to the orthohepadnavirus major surface antigen family. Li-HBsAg interacts with capsid protein and with HDV Large delta antigen. Isoform M associates with host chaperone CANX through its pre-S2 N glycan. This association may be essential for M proper secretion. In terms of processing, isoform M is N-terminally acetylated by host at a ratio of 90%, and N-glycosylated by host at the pre-S2 region. Myristoylated.

The protein resides in the virion membrane. Its function is as follows. The large envelope protein exists in two topological conformations, one which is termed 'external' or Le-HBsAg and the other 'internal' or Li-HBsAg. In its external conformation the protein attaches the virus to cell receptors and thereby initiating infection. This interaction determines the species specificity and liver tropism. This attachment induces virion internalization predominantly through caveolin-mediated endocytosis. The large envelope protein also assures fusion between virion membrane and endosomal membrane. In its internal conformation the protein plays a role in virion morphogenesis and mediates the contact with the nucleocapsid like a matrix protein. The middle envelope protein plays an important role in the budding of the virion. It is involved in the induction of budding in a nucleocapsid independent way. In this process the majority of envelope proteins bud to form subviral lipoprotein particles of 22 nm of diameter that do not contain a nucleocapsid. The sequence is that of Large envelope protein from Homo sapiens (Human).